A 132-amino-acid chain; its full sequence is DNA-directed RNA polymerase subunit omega (132 aa).

It belongs to the RNA polymerase subunit omega family. As to quaternary structure, the RNAP catalytic core consists of 2 alpha, 1 beta, 1 beta' and 1 omega subunit. When a sigma factor is associated with the core the holoenzyme is formed, which can initiate transcription.

The enzyme catalyses RNA(n) + a ribonucleoside 5'-triphosphate = RNA(n+1) + diphosphate. In terms of biological role, promotes RNA polymerase assembly. Latches the N- and C-terminal regions of the beta' subunit thereby facilitating its interaction with the beta and alpha subunits. The chain is DNA-directed RNA polymerase subunit omega from Bartonella quintana (strain Toulouse) (Rochalimaea quintana).